We begin with the raw amino-acid sequence, 620 residues long: Chaperone protein HscA homolog (620 aa).

It belongs to the heat shock protein 70 family.

Chaperone involved in the maturation of iron-sulfur cluster-containing proteins. Has a low intrinsic ATPase activity which is markedly stimulated by HscB. The sequence is that of Chaperone protein HscA homolog from Shewanella sp. (strain ANA-3).